The primary structure comprises 239 residues: Cell number regulator 6 (239 aa).

The span at 1–10 (MAEDATSSHP) shows a compositional bias: polar residues. The disordered stretch occupies residues 1 to 33 (MAEDATSSHPSRYVKLTKDQDAPAEDIRPGELN). The span at 16–29 (LTKDQDAPAEDIRP) shows a compositional bias: basic and acidic residues. A run of 2 helical transmembrane segments spans residues 107-127 (CVCH…TAIF) and 136-156 (FLIG…TGIF).

Belongs to the cornifelin family. As to expression, expressed in roots, leaves, stalks, apical meristems, immature ears, endosperm, pericarp and tassel spikelets.

Its subcellular location is the membrane. The chain is Cell number regulator 6 (CNR6) from Zea mays (Maize).